Consider the following 355-residue polypeptide: Probable dual-specificity RNA methyltransferase RlmN (355 aa).

E92 acts as the Proton acceptor in catalysis. In terms of domain architecture, Radical SAM core spans 98-330 (FHYGLSVCVT…TELGINCGVR (233 aa)). A disulfide bridge links C105 with C341. [4Fe-4S] cluster contacts are provided by C112, C116, and C119. S-adenosyl-L-methionine is bound by residues 164–165 (GE), S196, 219–221 (SLH), and N297. C341 functions as the S-methylcysteine intermediate in the catalytic mechanism.

Belongs to the radical SAM superfamily. RlmN family. It depends on [4Fe-4S] cluster as a cofactor.

It is found in the cytoplasm. It carries out the reaction adenosine(2503) in 23S rRNA + 2 reduced [2Fe-2S]-[ferredoxin] + 2 S-adenosyl-L-methionine = 2-methyladenosine(2503) in 23S rRNA + 5'-deoxyadenosine + L-methionine + 2 oxidized [2Fe-2S]-[ferredoxin] + S-adenosyl-L-homocysteine. The catalysed reaction is adenosine(37) in tRNA + 2 reduced [2Fe-2S]-[ferredoxin] + 2 S-adenosyl-L-methionine = 2-methyladenosine(37) in tRNA + 5'-deoxyadenosine + L-methionine + 2 oxidized [2Fe-2S]-[ferredoxin] + S-adenosyl-L-homocysteine. In terms of biological role, specifically methylates position 2 of adenine 2503 in 23S rRNA and position 2 of adenine 37 in tRNAs. The sequence is that of Probable dual-specificity RNA methyltransferase RlmN from Oceanobacillus iheyensis (strain DSM 14371 / CIP 107618 / JCM 11309 / KCTC 3954 / HTE831).